Consider the following 166-residue polypeptide: Lipoprotein signal peptidase (166 aa).

Transmembrane regions (helical) follow at residues 9–29, 45–65, 71–91, and 99–119; these read ASGA…FDQL, ALTS…FGFL, WQRW…CYLL, and LFSL…IDRL. Catalysis depends on residues Asp126 and Asp144. Residues 135–155 form a helical membrane-spanning segment; sequence WHFPAFNLADSAITVGAVLLI.

The protein belongs to the peptidase A8 family.

It localises to the cell inner membrane. The enzyme catalyses Release of signal peptides from bacterial membrane prolipoproteins. Hydrolyzes -Xaa-Yaa-Zaa-|-(S,diacylglyceryl)Cys-, in which Xaa is hydrophobic (preferably Leu), and Yaa (Ala or Ser) and Zaa (Gly or Ala) have small, neutral side chains.. Its pathway is protein modification; lipoprotein biosynthesis (signal peptide cleavage). Functionally, this protein specifically catalyzes the removal of signal peptides from prolipoproteins. The polypeptide is Lipoprotein signal peptidase (Burkholderia vietnamiensis (strain G4 / LMG 22486) (Burkholderia cepacia (strain R1808))).